The chain runs to 838 residues: Rho GTPase-activating protein 12 (838 aa).

Residues 10–72 form the SH3 domain; it reads AGQAYIEVEY…PAQYVKEVTR (63 aa). 2 stretches are compositionally biased toward polar residues: residues 155–172 and 189–198; these read GKFNSDSHSPKVSSQNRT and TSFSQEQSCD. A disordered region spans residues 155–239; that stretch reads GKFNSDSHSP…PPNQGRPDSP (85 aa). S163 carries the phosphoserine modification. A phosphoserine mark is found at S199, S211, and S213. T228 and T229 each carry phosphothreonine. At S238 the chain carries Phosphoserine. A Phosphotyrosine modification is found at Y241. The region spanning 263–296 is the WW 1 domain; that stretch reads IQVNGEWETHKDSSGRCYYYNRTTQERTWKPPRW. Residues 291–302 are compositionally biased toward basic and acidic residues; that stretch reads WKPPRWARDVST. A disordered region spans residues 291-346; it reads WKPPRWARDVSTSRDFQSPGEQEPLSSEENYHSSCFSQSDSQCGSPPRGWSEELDE. A compositionally biased stretch (polar residues) spans 303 to 334; it reads SRDFQSPGEQEPLSSEENYHSSCFSQSDSQCG. Residues 355–388 form the WW 2 domain; the sequence is DYTKEKWLKHVDDQGRQYYYSADGSRSEWELPKY. The interval 425–456 is disordered; the sequence is DSNDKDSPTTTKLCLPENESPPTSSKHQDPGQ. Residues 466–567 form the PH domain; it reads KITENGKKVR…WFKVLSSTIN (102 aa). Acidic residues predominate over residues 572–582; it reads EADEAAEEETP. The segment at 572 to 620 is disordered; sequence EADEAAEEETPDSPGVEKHDKEKDQKELKKLRSMKGSSMDSSEQKKTKK. A Phosphoserine modification is found at S584. Basic and acidic residues predominate over residues 586–601; it reads GVEKHDKEKDQKELKK. One can recognise a Rho-GAP domain in the interval 648–836; that stretch reads SNLANLCQRE…LILLELSTVF (189 aa).

GTPase activator for the Rho-type GTPases by converting them to an inactive GDP-bound state. In Mus musculus (Mouse), this protein is Rho GTPase-activating protein 12 (Arhgap12).